The following is a 576-amino-acid chain: RNA-directed RNA polymerase subunit beta (576 aa).

One can recognise a RdRp catalytic domain in the interval 259–391 (RLARDGSLLN…PNRKKTFCDG (133 aa)). Residues aspartate 274, aspartate 359, and aspartate 360 each coordinate Mg(2+).

In terms of assembly, homodimer; the replicase complex can dimerize. Part of the viral RNA-dependent RNA polymerase complex, the other subunits are the host ribosomal protein S1, EF-Tu and EF-Ts. S1 is needed for the initiation of genomic RNA (+)-strand replication. Requires Mg(2+) as cofactor.

The catalysed reaction is RNA(n) + a ribonucleoside 5'-triphosphate = RNA(n+1) + diphosphate. This is the catalytic subunit of the viral RNA-dependent RNA polymerase complex. This complex is involved in viral RNA replication that produces (+)-stranded genomes via a complementary, (-)-stranded intermediate. Binds RNA cooperatively with the host ribosomal protein S1. This is RNA-directed RNA polymerase subunit beta from Enterobacteria phage SP (Bacteriophage SP).